The primary structure comprises 347 residues: Quinolinate synthase (347 aa).

2 residues coordinate iminosuccinate: H47 and S68. C113 contacts [4Fe-4S] cluster. Residues 139–141 (YAN) and S156 contribute to the iminosuccinate site. Residue C200 coordinates [4Fe-4S] cluster. Residues 226 to 228 (HPE) and T243 contribute to the iminosuccinate site. C297 contacts [4Fe-4S] cluster.

Belongs to the quinolinate synthase family. Type 1 subfamily. The cofactor is [4Fe-4S] cluster.

The protein resides in the cytoplasm. It catalyses the reaction iminosuccinate + dihydroxyacetone phosphate = quinolinate + phosphate + 2 H2O + H(+). It functions in the pathway cofactor biosynthesis; NAD(+) biosynthesis; quinolinate from iminoaspartate: step 1/1. In terms of biological role, catalyzes the condensation of iminoaspartate with dihydroxyacetone phosphate to form quinolinate. This chain is Quinolinate synthase, found in Shigella dysenteriae serotype 1 (strain Sd197).